Reading from the N-terminus, the 365-residue chain is Peptide chain release factor 2 (365 aa).

Glutamine 252 bears the N5-methylglutamine mark.

This sequence belongs to the prokaryotic/mitochondrial release factor family. Post-translationally, methylated by PrmC. Methylation increases the termination efficiency of RF2.

The protein localises to the cytoplasm. Its function is as follows. Peptide chain release factor 2 directs the termination of translation in response to the peptide chain termination codons UGA and UAA. This chain is Peptide chain release factor 2, found in Pectobacterium atrosepticum (strain SCRI 1043 / ATCC BAA-672) (Erwinia carotovora subsp. atroseptica).